The chain runs to 191 residues: Recombination protein RecR (191 aa).

A C4-type zinc finger spans residues C56–C71. Residues K78–P170 enclose the Toprim domain.

The protein belongs to the RecR family.

Its function is as follows. May play a role in DNA repair. It seems to be involved in an RecBC-independent recombinational process of DNA repair. It may act with RecF and RecO. The polypeptide is Recombination protein RecR (Mycoplasmopsis pulmonis (strain UAB CTIP) (Mycoplasma pulmonis)).